The chain runs to 466 residues: Soluble pyridine nucleotide transhydrogenase (466 aa).

Residue 36 to 45 (ERYHNVGGGC) participates in FAD binding.

It belongs to the class-I pyridine nucleotide-disulfide oxidoreductase family. FAD is required as a cofactor.

The protein localises to the cytoplasm. The catalysed reaction is NAD(+) + NADPH = NADH + NADP(+). In terms of biological role, conversion of NADPH, generated by peripheral catabolic pathways, to NADH, which can enter the respiratory chain for energy generation. The chain is Soluble pyridine nucleotide transhydrogenase from Salmonella paratyphi A (strain ATCC 9150 / SARB42).